The chain runs to 359 residues: 3-dehydroquinate synthase (359 aa).

NAD(+) contacts are provided by residues 71-76 (DGEQHK), 105-109 (GVIGD), 129-130 (TT), lysine 142, and lysine 151. Residues glutamate 184, histidine 247, and histidine 264 each coordinate Zn(2+).

It belongs to the sugar phosphate cyclases superfamily. Dehydroquinate synthase family. Requires NAD(+) as cofactor. The cofactor is Co(2+). It depends on Zn(2+) as a cofactor.

Its subcellular location is the cytoplasm. It carries out the reaction 7-phospho-2-dehydro-3-deoxy-D-arabino-heptonate = 3-dehydroquinate + phosphate. It participates in metabolic intermediate biosynthesis; chorismate biosynthesis; chorismate from D-erythrose 4-phosphate and phosphoenolpyruvate: step 2/7. In terms of biological role, catalyzes the conversion of 3-deoxy-D-arabino-heptulosonate 7-phosphate (DAHP) to dehydroquinate (DHQ). This is 3-dehydroquinate synthase from Chromobacterium violaceum (strain ATCC 12472 / DSM 30191 / JCM 1249 / CCUG 213 / NBRC 12614 / NCIMB 9131 / NCTC 9757 / MK).